Here is a 476-residue protein sequence, read N- to C-terminus: Cytosolic iron-sulfur assembly component 3 (476 aa).

Ala2 is modified (N-acetylalanine). Positions 24, 71, 74, 77, 190, and 246 each coordinate [4Fe-4S] cluster. The segment at 297–316 (DGLTSSVSAEEPSSHRGGGS) is disordered. Cys395 and Cys399 together coordinate [4Fe-4S] cluster.

It belongs to the NARF family. As to quaternary structure, external component of the CIA complex. In the CIA complex, interacts directly with CIAO1 and MMS19.

Component of the cytosolic iron-sulfur protein assembly (CIA) complex, a multiprotein complex that mediates the incorporation of iron-sulfur cluster into extramitochondrial Fe/S proteins. Seems to negatively regulate the level of HIF1A expression, although this effect could be indirect. In Mus musculus (Mouse), this protein is Cytosolic iron-sulfur assembly component 3 (Ciao3).